The following is a 91-amino-acid chain: Non-structural protein 3a (91 aa).

The first 19 residues, 1–19, serve as a signal peptide directing secretion; that stretch reads MVSFNATAILLLLLANAFS.

The sequence is that of Non-structural protein 3a from Tylonycteris pachypus (Lesser bamboo bat).